The chain runs to 489 residues: Glutamate--tRNA ligase (489 aa).

The short motif at 12-22 is the 'HIGH' region element; that stretch reads PSPTGIPHVGM. Residues 256–260 carry the 'KMSKS' region motif; sequence KLSKR. Residue Lys-259 participates in ATP binding.

This sequence belongs to the class-I aminoacyl-tRNA synthetase family. Glutamate--tRNA ligase type 1 subfamily. Monomer.

It localises to the cytoplasm. The catalysed reaction is tRNA(Glu) + L-glutamate + ATP = L-glutamyl-tRNA(Glu) + AMP + diphosphate. Catalyzes the attachment of glutamate to tRNA(Glu) in a two-step reaction: glutamate is first activated by ATP to form Glu-AMP and then transferred to the acceptor end of tRNA(Glu). This chain is Glutamate--tRNA ligase, found in Mycobacterium ulcerans (strain Agy99).